Here is a 213-residue protein sequence, read N- to C-terminus: V-type ATP synthase subunit D (213 aa).

This sequence belongs to the V-ATPase D subunit family.

Produces ATP from ADP in the presence of a proton gradient across the membrane. The sequence is that of V-type ATP synthase subunit D from Clostridium botulinum (strain Alaska E43 / Type E3).